The primary structure comprises 330 residues: Aspartate--ammonia ligase (330 aa).

This sequence belongs to the class-II aminoacyl-tRNA synthetase family. AsnA subfamily.

It localises to the cytoplasm. It carries out the reaction L-aspartate + NH4(+) + ATP = L-asparagine + AMP + diphosphate + H(+). The protein operates within amino-acid biosynthesis; L-asparagine biosynthesis; L-asparagine from L-aspartate (ammonia route): step 1/1. This chain is Aspartate--ammonia ligase, found in Klebsiella pneumoniae subsp. pneumoniae (strain ATCC 700721 / MGH 78578).